Consider the following 545-residue polypeptide: Glucose-6-phosphate isomerase (545 aa).

The active-site Proton donor is the Glu-351. Residues His-382 and Lys-510 contribute to the active site.

It belongs to the GPI family.

It localises to the cytoplasm. It catalyses the reaction alpha-D-glucose 6-phosphate = beta-D-fructose 6-phosphate. It participates in carbohydrate biosynthesis; gluconeogenesis. It functions in the pathway carbohydrate degradation; glycolysis; D-glyceraldehyde 3-phosphate and glycerone phosphate from D-glucose: step 2/4. Catalyzes the reversible isomerization of glucose-6-phosphate to fructose-6-phosphate. This is Glucose-6-phosphate isomerase from Shewanella sp. (strain MR-4).